Here is a 143-residue protein sequence, read N- to C-terminus: Nucleoside diphosphate kinase (143 aa).

ATP is bound by residues Lys11, Phe59, Arg87, Thr93, Arg104, and Asn114. His117 (pros-phosphohistidine intermediate) is an active-site residue.

It belongs to the NDK family. Homotetramer. Mg(2+) serves as cofactor.

Its subcellular location is the cytoplasm. It catalyses the reaction a 2'-deoxyribonucleoside 5'-diphosphate + ATP = a 2'-deoxyribonucleoside 5'-triphosphate + ADP. The enzyme catalyses a ribonucleoside 5'-diphosphate + ATP = a ribonucleoside 5'-triphosphate + ADP. Its function is as follows. Major role in the synthesis of nucleoside triphosphates other than ATP. The ATP gamma phosphate is transferred to the NDP beta phosphate via a ping-pong mechanism, using a phosphorylated active-site intermediate. The sequence is that of Nucleoside diphosphate kinase from Pseudomonas aeruginosa (strain UCBPP-PA14).